The primary structure comprises 522 residues: Putative cysteine ligase BshC (522 aa).

Residues 436-469 (SWAQAEKAKALKQLEDIEKKLRKAEERKHDDVIK) are a coiled coil.

The protein belongs to the BshC family.

The chain is Putative cysteine ligase BshC from Cytophaga hutchinsonii (strain ATCC 33406 / DSM 1761 / CIP 103989 / NBRC 15051 / NCIMB 9469 / D465).